The sequence spans 412 residues: Motilin receptor (412 aa).

At 1 to 35 (MGSPWNGSDGPEGAREPPWPALPPCDERRCSPFPL) the chain is on the extracellular side. Asn6 carries an N-linked (GlcNAc...) asparagine glycan. Residues 36 to 56 (GALVPVTAVCLCLFVVGVSGN) traverse the membrane as a helical segment. At 57-74 (VVTVMLIGRYRDMRTTTN) the chain is on the cytoplasmic side. The chain crosses the membrane as a helical span at residues 75–94 (LYLGSMAVSDLLILLGLPFD). At 95-112 (LYRLWRSRPWVFGPLLCR) the chain is on the extracellular side. A disulfide bond links Cys111 and Cys235. The helical transmembrane segment at 113–134 (LSLYVGEGCTYATLLHMTALSV) threads the bilayer. The Cytoplasmic segment spans residues 135–157 (ERYLAICRPLRARVLVTRRRVRA). A helical membrane pass occupies residues 158 to 178 (LIAVLWAVALLSAGPFLFLVG). Residues 179–246 (VEQDPGISVV…PSPAQLGALR (68 aa)) lie on the Extracellular side of the membrane. Asn192 is a glycosylation site (N-linked (GlcNAc...) asparagine). Residues 247–270 (VMLWVTTAYFFLPFLCLSILYGLI) form a helical membrane-spanning segment. The Cytoplasmic segment spans residues 271-298 (GRELWSSRRPLRGPAASGRERGHRQTVR). The helical transmembrane segment at 299–320 (VLLVVVLAFIICWLPFHVGRII) threads the bilayer. At 321 to 334 (YINTEDSRMMYFSQ) the chain is on the extracellular side. Residues 335–358 (YFNIVALQLFYLSASINPILYNLI) traverse the membrane as a helical segment. Over 359 to 412 (SKKYRAAAFKLLLARKSRPRGFHRSRDTAGEVAGDTGGDTVGYTETSANVKTMG) the chain is Cytoplasmic.

This sequence belongs to the G-protein coupled receptor 1 family. Expressed only in thyroid, stomach, and bone marrow.

The protein resides in the cell membrane. Its function is as follows. Receptor for motilin. The protein is Motilin receptor (MLNR) of Homo sapiens (Human).